The following is a 427-amino-acid chain: 3-phosphoshikimate 1-carboxyvinyltransferase (427 aa).

3-phosphoshikimate is bound by residues lysine 20, serine 21, and arginine 25. Lysine 20 lines the phosphoenolpyruvate pocket. Positions 92 and 120 each coordinate phosphoenolpyruvate. The 3-phosphoshikimate site is built by serine 166, glutamine 168, aspartate 312, and lysine 339. Residue glutamine 168 coordinates phosphoenolpyruvate. Aspartate 312 acts as the Proton acceptor in catalysis. Arginine 343 and arginine 385 together coordinate phosphoenolpyruvate.

Belongs to the EPSP synthase family. Monomer.

The protein localises to the cytoplasm. The enzyme catalyses 3-phosphoshikimate + phosphoenolpyruvate = 5-O-(1-carboxyvinyl)-3-phosphoshikimate + phosphate. Its pathway is metabolic intermediate biosynthesis; chorismate biosynthesis; chorismate from D-erythrose 4-phosphate and phosphoenolpyruvate: step 6/7. Functionally, catalyzes the transfer of the enolpyruvyl moiety of phosphoenolpyruvate (PEP) to the 5-hydroxyl of shikimate-3-phosphate (S3P) to produce enolpyruvyl shikimate-3-phosphate and inorganic phosphate. This Streptococcus pneumoniae serotype 19F (strain G54) protein is 3-phosphoshikimate 1-carboxyvinyltransferase.